The following is a 244-amino-acid chain: INO80 complex subunit E (244 aa).

Residues 10-54 are a coiled coil; the sequence is DYKKKYRNLKRKLKFLIYEHECFQEELRKAQRKLLKVSRDKSFLL. Disordered regions lie at residues 59 to 187 and 222 to 244; these read QYEN…PLTF and FSDA…DIPE. 2 stretches are compositionally biased toward low complexity: residues 99 to 115 and 122 to 136; these read PPLG…LPPS and ASRA…LASP. A compositionally biased stretch (basic residues) spans 157 to 171; that stretch reads RPKREKRPRLPRKLK. Glycyl lysine isopeptide (Lys-Gly) (interchain with G-Cter in SUMO2) cross-links involve residues K159 and K171. Acidic residues predominate over residues 230–244; it reads DALDGDDDLVIDIPE.

In terms of assembly, component of the chromatin remodeling INO80 complex; specifically part of a complex module associated with the N-terminus of INO80.

The protein localises to the nucleus. Its function is as follows. Putative regulatory component of the chromatin remodeling INO80 complex which is involved in transcriptional regulation, DNA replication and probably DNA repair. This is INO80 complex subunit E (INO80E) from Bos taurus (Bovine).